We begin with the raw amino-acid sequence, 56 residues long: MAVQQNRKTRSRRGMRRSHDALTAAALSVDATSGETHLRHNVTAEGYYRGKKVINK.

The segment at 1 to 21 is disordered; that stretch reads MAVQQNRKTRSRRGMRRSHDA. Residues 7–16 are compositionally biased toward basic residues; that stretch reads RKTRSRRGMR.

This sequence belongs to the bacterial ribosomal protein bL32 family.

The protein is Large ribosomal subunit protein bL32 of Vibrio cholerae serotype O1 (strain ATCC 39541 / Classical Ogawa 395 / O395).